The chain runs to 78 residues: Large ribosomal subunit protein uL10 (78 aa).

Over residues Ala-40–Ala-50 the composition is skewed to low complexity. The tract at residues Ala-40–His-78 is disordered. Residues Glu-51–Glu-64 show a composition bias toward basic and acidic residues.

The protein belongs to the universal ribosomal protein uL10 family. As to quaternary structure, P0 forms a pentameric complex by interaction with dimers of P1 and P2.

The protein localises to the nucleus. The protein resides in the cytoplasm. Functionally, ribosomal protein P0 is the functional equivalent of E.coli protein L10. In Culicoides nubeculosus (Biting midge), this protein is Large ribosomal subunit protein uL10.